The sequence spans 234 residues: Thiamine import ATP-binding protein ThiQ (234 aa).

Residues 2–230 form the ABC transporter domain; that stretch reads LVLDDVQYTY…HPSKTLQAFV (229 aa). An ATP-binding site is contributed by 32 to 39; sequence GPSGAGKS.

The protein belongs to the ABC transporter superfamily. Thiamine importer (TC 3.A.1.19.1) family. The complex is composed of two ATP-binding proteins (ThiQ), two transmembrane proteins (ThiP) and a solute-binding protein (ThiB).

It is found in the cell inner membrane. It catalyses the reaction thiamine(out) + ATP + H2O = thiamine(in) + ADP + phosphate + H(+). Part of the ABC transporter complex ThiBPQ involved in thiamine import. Responsible for energy coupling to the transport system. This is Thiamine import ATP-binding protein ThiQ from Vibrio parahaemolyticus serotype O3:K6 (strain RIMD 2210633).